Consider the following 61-residue polypeptide: Small ribosomal subunit protein uS14B (61 aa).

Residues Cys24, Cys27, Cys40, and Cys43 each contribute to the Zn(2+) site.

Belongs to the universal ribosomal protein uS14 family. Zinc-binding uS14 subfamily. In terms of assembly, part of the 30S ribosomal subunit. Contacts proteins S3 and S10. Zn(2+) serves as cofactor.

In terms of biological role, binds 16S rRNA, required for the assembly of 30S particles and may also be responsible for determining the conformation of the 16S rRNA at the A site. The protein is Small ribosomal subunit protein uS14B of Lacticaseibacillus paracasei (strain ATCC 334 / BCRC 17002 / CCUG 31169 / CIP 107868 / KCTC 3260 / NRRL B-441) (Lactobacillus paracasei).